The sequence spans 876 residues: Phosphoenolpyruvate carboxylase (876 aa).

Catalysis depends on residues H138 and K543.

The protein belongs to the PEPCase type 1 family. Mg(2+) serves as cofactor.

It catalyses the reaction oxaloacetate + phosphate = phosphoenolpyruvate + hydrogencarbonate. Forms oxaloacetate, a four-carbon dicarboxylic acid source for the tricarboxylic acid cycle. This Aliivibrio salmonicida (strain LFI1238) (Vibrio salmonicida (strain LFI1238)) protein is Phosphoenolpyruvate carboxylase.